The following is a 326-amino-acid chain: Elongation factor Ts (326 aa).

The interval 80–83 (TDFV) is involved in Mg(2+) ion dislocation from EF-Tu.

This sequence belongs to the EF-Ts family.

The protein localises to the cytoplasm. Its function is as follows. Associates with the EF-Tu.GDP complex and induces the exchange of GDP to GTP. It remains bound to the aminoacyl-tRNA.EF-Tu.GTP complex up to the GTP hydrolysis stage on the ribosome. This Rhodopirellula baltica (strain DSM 10527 / NCIMB 13988 / SH1) protein is Elongation factor Ts.